A 250-amino-acid polypeptide reads, in one-letter code: Pyrroloquinoline-quinone synthase (250 aa).

This sequence belongs to the PqqC family.

The enzyme catalyses 6-(2-amino-2-carboxyethyl)-7,8-dioxo-1,2,3,4,7,8-hexahydroquinoline-2,4-dicarboxylate + 3 O2 = pyrroloquinoline quinone + 2 H2O2 + 2 H2O + H(+). Its pathway is cofactor biosynthesis; pyrroloquinoline quinone biosynthesis. Ring cyclization and eight-electron oxidation of 3a-(2-amino-2-carboxyethyl)-4,5-dioxo-4,5,6,7,8,9-hexahydroquinoline-7,9-dicarboxylic-acid to PQQ. The polypeptide is Pyrroloquinoline-quinone synthase (Xanthomonas oryzae pv. oryzae (strain KACC10331 / KXO85)).